The chain runs to 632 residues: Phosphomethylpyrimidine synthase (632 aa).

Positions 1–13 (MNIRSNPDTTLPA) are enriched in polar residues. Residues 1 to 26 (MNIRSNPDTTLPAVTTGPLPSSRKIF) form a disordered region. Substrate contacts are provided by residues asparagine 221, methionine 250, tyrosine 279, histidine 315, 335–337 (SRG), 376–379 (DGLR), and glutamate 415. Histidine 419 is a binding site for Zn(2+). Tyrosine 442 lines the substrate pocket. Residue histidine 483 coordinates Zn(2+). 3 residues coordinate [4Fe-4S] cluster: cysteine 563, cysteine 566, and cysteine 571.

The protein belongs to the ThiC family. As to quaternary structure, homodimer. [4Fe-4S] cluster serves as cofactor.

The catalysed reaction is 5-amino-1-(5-phospho-beta-D-ribosyl)imidazole + S-adenosyl-L-methionine = 4-amino-2-methyl-5-(phosphooxymethyl)pyrimidine + CO + 5'-deoxyadenosine + formate + L-methionine + 3 H(+). The protein operates within cofactor biosynthesis; thiamine diphosphate biosynthesis. Functionally, catalyzes the synthesis of the hydroxymethylpyrimidine phosphate (HMP-P) moiety of thiamine from aminoimidazole ribotide (AIR) in a radical S-adenosyl-L-methionine (SAM)-dependent reaction. In Afipia carboxidovorans (strain ATCC 49405 / DSM 1227 / KCTC 32145 / OM5) (Oligotropha carboxidovorans), this protein is Phosphomethylpyrimidine synthase.